The chain runs to 1238 residues: DNA-directed RNA polymerase subunit beta (1238 aa).

The disordered stretch occupies residues 1186–1238; sequence IEGREDTPPEEVYEEGYEEGFEEESEELPEDIDFEPDSFDIENDDLDLEDFDI. Residues 1193–1238 are compositionally biased toward acidic residues; sequence PPEEVYEEGYEEGFEEESEELPEDIDFEPDSFDIENDDLDLEDFDI.

It belongs to the RNA polymerase beta chain family. In terms of assembly, the RNAP catalytic core consists of 2 alpha, 1 beta, 1 beta' and 1 omega subunit. When a sigma factor is associated with the core the holoenzyme is formed, which can initiate transcription.

It catalyses the reaction RNA(n) + a ribonucleoside 5'-triphosphate = RNA(n+1) + diphosphate. Functionally, DNA-dependent RNA polymerase catalyzes the transcription of DNA into RNA using the four ribonucleoside triphosphates as substrates. The protein is DNA-directed RNA polymerase subunit beta of Thermoanaerobacter sp. (strain X514).